Here is an 87-residue protein sequence, read N- to C-terminus: Small ribosomal subunit protein uS17 (87 aa).

The protein belongs to the universal ribosomal protein uS17 family. As to quaternary structure, part of the 30S ribosomal subunit.

Functionally, one of the primary rRNA binding proteins, it binds specifically to the 5'-end of 16S ribosomal RNA. The chain is Small ribosomal subunit protein uS17 from Bacillus thuringiensis (strain Al Hakam).